The following is a 384-amino-acid chain: Dihydrolipoyllysine-residue acetyltransferase component of pyruvate dehydrogenase complex (384 aa).

Residues 2–77 (ANEFKFTDVG…SIGQVMAVIG (76 aa)) form the Lipoyl-binding domain. N6-lipoyllysine is present on K43. H356 is a catalytic residue.

This sequence belongs to the 2-oxoacid dehydrogenase family. As to quaternary structure, forms a 24-polypeptide structural core with octahedral symmetry. Requires (R)-lipoate as cofactor.

The catalysed reaction is N(6)-[(R)-dihydrolipoyl]-L-lysyl-[protein] + acetyl-CoA = N(6)-[(R)-S(8)-acetyldihydrolipoyl]-L-lysyl-[protein] + CoA. Functionally, the pyruvate dehydrogenase complex catalyzes the overall conversion of pyruvate to acetyl-CoA and CO(2). It contains multiple copies of three enzymatic components: pyruvate dehydrogenase (E1), dihydrolipoamide acetyltransferase (E2) and lipoamide dehydrogenase (E3). This is Dihydrolipoyllysine-residue acetyltransferase component of pyruvate dehydrogenase complex (pdhC) from Mycoplasma genitalium (strain ATCC 33530 / DSM 19775 / NCTC 10195 / G37) (Mycoplasmoides genitalium).